Reading from the N-terminus, the 29-residue chain is Glucagon (29 aa).

This sequence belongs to the glucagon family.

The protein localises to the secreted. Promotes hydrolysis of glycogen and lipids, and raises the blood sugar level. The sequence is that of Glucagon (gcg) from Thunnus obesus (Bigeye tuna).